Consider the following 36-residue polypeptide: Potassium channel toxin alpha-KTx 6.14 (36 aa).

Cystine bridges form between C5-C25, C11-C30, C15-C32, and C20-C35.

In terms of tissue distribution, expressed by the venom gland.

It is found in the secreted. Blocks Shaker B channels expressed in Sf9 cells, with a dissociation constant of 52 nM. In Hoffmannihadrurus gertschi (Scorpion), this protein is Potassium channel toxin alpha-KTx 6.14.